The primary structure comprises 693 residues: Translation factor GUF1 homolog, chloroplastic (693 aa).

The transit peptide at 1-51 (MATDLSSSSTLLLSRNCKTPPFYHTTNSLSLSKTHHLYASRNAVVSRLRLL) directs the protein to the chloroplast. The region spanning 86 to 267 (SNIRNFCIIA…AIVERIPSPR (182 aa)) is the tr-type G domain. GTP-binding positions include 95-102 (AHIDHGKS), 160-164 (DTPGH), and 214-217 (NKID).

The protein belongs to the TRAFAC class translation factor GTPase superfamily. Classic translation factor GTPase family. LepA subfamily.

It is found in the plastid. The protein resides in the chloroplast. The enzyme catalyses GTP + H2O = GDP + phosphate + H(+). In terms of biological role, promotes chloroplast protein synthesis. May act as a fidelity factor of the translation reaction, by catalyzing a one-codon backward translocation of tRNAs on improperly translocated ribosomes. The chain is Translation factor GUF1 homolog, chloroplastic from Ricinus communis (Castor bean).